The sequence spans 747 residues: Eukaryotic translation initiation factor 3 subunit B (747 aa).

The region spanning Ala-42–Asp-128 is the RRM domain. 5 WD repeats span residues Asp-195 to Arg-234, Ala-236 to Ser-292, Ala-310 to Lys-349, Leu-520 to Glu-563, and Ala-578 to Glu-623.

The protein belongs to the eIF-3 subunit B family. Component of the eukaryotic translation initiation factor 3 (eIF-3) complex.

Its subcellular location is the cytoplasm. In terms of biological role, RNA-binding component of the eukaryotic translation initiation factor 3 (eIF-3) complex, which is involved in protein synthesis of a specialized repertoire of mRNAs and, together with other initiation factors, stimulates binding of mRNA and methionyl-tRNAi to the 40S ribosome. The eIF-3 complex specifically targets and initiates translation of a subset of mRNAs involved in cell proliferation. This chain is Eukaryotic translation initiation factor 3 subunit B (prt-1), found in Neurospora crassa (strain ATCC 24698 / 74-OR23-1A / CBS 708.71 / DSM 1257 / FGSC 987).